Reading from the N-terminus, the 247-residue chain is 5'-nucleotidase SurE (247 aa).

Positions 8, 9, 39, and 91 each coordinate a divalent metal cation.

Belongs to the SurE nucleotidase family. It depends on a divalent metal cation as a cofactor.

The protein localises to the cytoplasm. The catalysed reaction is a ribonucleoside 5'-phosphate + H2O = a ribonucleoside + phosphate. Nucleotidase that shows phosphatase activity on nucleoside 5'-monophosphates. The chain is 5'-nucleotidase SurE from Chromobacterium violaceum (strain ATCC 12472 / DSM 30191 / JCM 1249 / CCUG 213 / NBRC 12614 / NCIMB 9131 / NCTC 9757 / MK).